The primary structure comprises 298 residues: MAVSARDYWDLTKPKVVALIVFTALVGMFLAIPDMPTWLQVRTGALGFLGIWLAASAAAAINQLLDAKIDAQMARTSWRPLVVGKVRPWQVLVFAGVLIVISMTILVVWVNVITAVLTFASLIGYAVIYTVYLKRATSQNIVIGGLAGATPPMLGWAAVTGLPTSADWINASLLVLIIFIWTPPHFWALAIFRRADYAKAAIPMLPVTHGVPHTRKQILVYTVLLAIVTLAPVAVGMSGMFYLGGAAVLNAVFLWYAWRMLNPPDELFSMKMFGYSIVYLMALFAFLMVDHLLLPWVR.

9 consecutive transmembrane segments (helical) span residues 16-36 (VVAL…PDMP), 45-65 (ALGF…NQLL), 93-113 (VFAG…VNVI), 114-134 (TAVL…VYLK), 141-161 (IVIG…AVTG), 172-192 (SLLV…LAIF), 218-238 (ILVY…VGMS), 241-261 (FYLG…WRML), and 277-297 (IVYL…LPWV).

Belongs to the UbiA prenyltransferase family. Protoheme IX farnesyltransferase subfamily.

The protein resides in the cell inner membrane. The catalysed reaction is heme b + (2E,6E)-farnesyl diphosphate + H2O = Fe(II)-heme o + diphosphate. The protein operates within porphyrin-containing compound metabolism; heme O biosynthesis; heme O from protoheme: step 1/1. In terms of biological role, converts heme B (protoheme IX) to heme O by substitution of the vinyl group on carbon 2 of heme B porphyrin ring with a hydroxyethyl farnesyl side group. This chain is Protoheme IX farnesyltransferase, found in Xanthomonas axonopodis pv. citri (strain 306).